The following is a 216-amino-acid chain: Thymidylate kinase (216 aa).

G10–T17 serves as a coordination point for ATP.

Belongs to the thymidylate kinase family.

The catalysed reaction is dTMP + ATP = dTDP + ADP. Its function is as follows. Phosphorylation of dTMP to form dTDP in both de novo and salvage pathways of dTTP synthesis. The polypeptide is Thymidylate kinase (Prochlorococcus marinus (strain MIT 9303)).